The sequence spans 729 residues: 1,4-alpha-glucan branching enzyme GlgB 2 (729 aa).

Catalysis depends on Asp-408, which acts as the Nucleophile. Glu-461 acts as the Proton donor in catalysis.

The protein belongs to the glycosyl hydrolase 13 family. GlgB subfamily. In terms of assembly, monomer.

It catalyses the reaction Transfers a segment of a (1-&gt;4)-alpha-D-glucan chain to a primary hydroxy group in a similar glucan chain.. It participates in glycan biosynthesis; glycogen biosynthesis. Catalyzes the formation of the alpha-1,6-glucosidic linkages in glycogen by scission of a 1,4-alpha-linked oligosaccharide from growing alpha-1,4-glucan chains and the subsequent attachment of the oligosaccharide to the alpha-1,6 position. This chain is 1,4-alpha-glucan branching enzyme GlgB 2, found in Xanthomonas campestris pv. campestris (strain 8004).